A 57-amino-acid chain; its full sequence is Small ribosomal subunit protein bS21 (57 aa).

Residues 22–57 (QCSKSGVLSEAKKRKHYEKPSEKRKRKATEKRNSRK) form a disordered region. Basic residues predominate over residues 33–57 (KKRKHYEKPSEKRKRKATEKRNSRK).

Belongs to the bacterial ribosomal protein bS21 family.

In Natranaerobius thermophilus (strain ATCC BAA-1301 / DSM 18059 / JW/NM-WN-LF), this protein is Small ribosomal subunit protein bS21.